The sequence spans 24 residues: 29 kDa outer membrane protein (24 aa).

The protein localises to the cell outer membrane. May be involved in transporting molecules across the outer membrane. The sequence is that of 29 kDa outer membrane protein from Acinetobacter baumannii.